The primary structure comprises 476 residues: Membrane-bound lytic murein transglycosylase F (476 aa).

The signal sequence occupies residues 1-15; the sequence is MRSFLLILFCVSLLT. The tract at residues 16–258 is non-LT domain; it reads GCQGERVDAA…HLNEKYFAHV (243 aa). An LT domain region spans residues 259 to 476; that stretch reads KRFDYVDTRA…QSEISAAQPN (218 aa). Glu303 is a catalytic residue. The interval 456–476 is disordered; the sequence is EAQQQTAEKQSQSEISAAQPN.

In the N-terminal section; belongs to the bacterial solute-binding protein 3 family. This sequence in the C-terminal section; belongs to the transglycosylase Slt family.

It is found in the cell outer membrane. The enzyme catalyses Exolytic cleavage of the (1-&gt;4)-beta-glycosidic linkage between N-acetylmuramic acid (MurNAc) and N-acetylglucosamine (GlcNAc) residues in peptidoglycan, from either the reducing or the non-reducing ends of the peptidoglycan chains, with concomitant formation of a 1,6-anhydrobond in the MurNAc residue.. Its function is as follows. Murein-degrading enzyme that degrades murein glycan strands and insoluble, high-molecular weight murein sacculi, with the concomitant formation of a 1,6-anhydromuramoyl product. Lytic transglycosylases (LTs) play an integral role in the metabolism of the peptidoglycan (PG) sacculus. Their lytic action creates space within the PG sacculus to allow for its expansion as well as for the insertion of various structures such as secretion systems and flagella. The protein is Membrane-bound lytic murein transglycosylase F of Shewanella loihica (strain ATCC BAA-1088 / PV-4).